Reading from the N-terminus, the 1271-residue chain is Probable WRKY transcription factor protein 1 (1271 aa).

Residues 1–12 (MGAQYSTELNKY) show a composition bias toward polar residues. Disordered stretches follow at residues 1–138 (MGAQ…NSDR), 204–312 (NNNN…QQNG), and 370–515 (NNNN…RTNS). A coiled-coil region spans residues 9-71 (LNKYNNNNNN…NNNNNNNNNN (63 aa)). Composition is skewed to low complexity over residues 13–103 (NNNN…NNNN), 116–135 (INNTNKDTNIPNNSNSNNNN), 204–216 (NNNNNNNNNNENN), and 223–259 (SSTTTTTTTTTTTNNNSNNNNNNNNNNNNNNNNNNNN). Acidic residues predominate over residues 260–274 (NEDDEDDYGDDDTIE). Residues 297-312 (SNLNDTNGGNSPQQNG) are compositionally biased toward polar residues. The stretch at 320 to 372 (KKLLALQQKQLEQEQEQKQQQKQQQQQQQQQQQQQQQQQQQQQKDAIENINNN) forms a coiled coil. A compositionally biased stretch (low complexity) spans 370–388 (NNNNNNKLQPIVKNSVNKT). Residues 413 to 442 (NEDEYDASDEYIDDDDDDDEKYDDDDDEYF) are compositionally biased toward acidic residues. Positions 443–458 (EGNNNNNYKKNNISNK) are enriched in low complexity. A compositionally biased stretch (basic and acidic residues) spans 475-487 (EIFKQKKLNHDKN). The segment covering 488-515 (QSNPKQQLTSHSEFDNSLLNKNQSRTNS) has biased composition (polar residues). Residues 520–574 (LQIKEENYHQIQQEHGEKQQQQQQQQQQPQQQQQQQQQQQQQQQQEMQVDKEQTE) are a coiled coil. Residues 578–587 (NTNKKEEQKP) are compositionally biased toward basic and acidic residues. Disordered regions lie at residues 578 to 650 (NTNK…EGFL) and 667 to 811 (SKKS…NISN). Residues 610–642 (NNENNNNNNNNNNNNNNNNNNNNNNNNNNYRNN) show a composition bias toward low complexity. Polar residues predominate over residues 672-702 (NVVPTSPKSNLSDQQPPFSPVQISPQKQSPA). Composition is skewed to low complexity over residues 703-715 (TTTTTTTTTTPTP), 725-766 (NNNI…NNIN), and 774-811 (NSTQNNNNNNNNNNNSPQNSNTNSNNSNNSNNSNNISN). The stretch at 766 to 786 (NNEEDEENNSTQNNNNNNNNN) forms a coiled coil. A DNA-binding region (WRKY 1) is located at residues 808 to 872 (NISNIVSDGY…YKGEHCHGFP (65 aa)). Zn(2+) contacts are provided by C839, C844, H867, and H869. The interval 890 to 1095 (FEGLDGNNNN…RFNGTSESKG (206 aa)) is disordered. The segment covering 895 to 918 (GNNNNNNNNNNNNNNYSSNSNSNG) has biased composition (low complexity). Gly residues predominate over residues 919–937 (NGNGNGNGNGNGNGNGNGN). Positions 938-956 (SNGNQDQNGNSFNDQNGDS) are enriched in low complexity. Over residues 957-966 (PTQHGQISPM) the composition is skewed to polar residues. The span at 967-995 (NSPKNTIPTTTTTTTSISTYVNTNSTNKK) shows a compositional bias: low complexity. Positions 998–1010 (SKQEKKISVKNET) are enriched in basic and acidic residues. Residues 1011–1021 (TDDDEFQEDID) are compositionally biased toward acidic residues. Positions 1013-1040 (DDEFQEDIDQLSNNNNNNNNNNNNNNNN) form a coiled coil. A compositionally biased stretch (low complexity) spans 1025-1085 (NNNNNNNNNN…NNNNNNNNNN (61 aa)). The WRKY 2 DNA-binding region spans 1105–1167 (SSIDHLDDGF…YRGKHNHDPP (63 aa)). Residues C1136, C1141, H1162, and H1164 each contribute to the Zn(2+) site. The disordered stretch occupies residues 1180–1210 (NGLYNNNNNNNNNNNNNNNNNNNNNNINNIN). A compositionally biased stretch (low complexity) spans 1184-1210 (NNNNNNNNNNNNNNNNNNNNNNINNIN).

The protein belongs to the WRKY group I family.

The protein resides in the nucleus. Probable transcription factor. Interacts specifically with the W box (5'-(T)TGAC[CT]-3'), a frequently occurring elicitor-responsive cis-acting element. The protein is Probable WRKY transcription factor protein 1 (wrky1) of Dictyostelium discoideum (Social amoeba).